A 427-amino-acid polypeptide reads, in one-letter code: Mitogen-activated protein kinase 8 (427 aa).

The 296-residue stretch at 26 to 321 folds into the Protein kinase domain; sequence YQNLKPIGSG…VDEALQHPYI (296 aa). ATP is bound by residues 32–40 and K55; that span reads IGSGAQGIV. C116 is subject to S-nitrosocysteine. The active-site Proton acceptor is the D151. T183 is subject to Phosphothreonine; by MAP2K7. Residues 183–185 carry the TXY motif; that stretch reads TPY. At Y185 the chain carries Phosphotyrosine; by MAP2K4. 2 positions are modified to phosphoserine: M301 and S377. A disordered region spans residues 371-427; the sequence is VIRGQPSPLGAAVINGSQHPSSSSSVNDVSSMSTDPTLASDTDSSLEAAAGPLGCCR. Residues 387-403 show a composition bias toward low complexity; the sequence is SQHPSSSSSVNDVSSMS. The span at 404-415 shows a compositional bias: polar residues; sequence TDPTLASDTDSS.

This sequence belongs to the protein kinase superfamily. CMGC Ser/Thr protein kinase family. MAP kinase subfamily. As to quaternary structure, forms a complex with MAPK8IP1 and ARHGEF28. Found in a complex with SH3RF1, RAC1, MAP3K11/MLK3, MAP2K7/MKK7 and MAPK8IP1/JIP1. Found in a complex with SH3RF1, RAC2, MAP3K7/TAK1, MAP2K7/MKK7, MAPK8IP1/JIP1 and MAPK9/JNK2. Binds to at least four scaffolding proteins, MAPK8IP1/JIP-1, MAPK8IP2/JIP-2, MAPK8IP3/JIP-3/JSAP1 and SPAG9/MAPK8IP4/JIP-4. These proteins also bind other components of the JNK signaling pathway. Interacts with TP53 and WWOX. Interacts with JAMP. Interacts with HSF1 (via D domain and preferentially with hyperphosphorylated form); this interaction occurs under both normal growth conditions and immediately upon heat shock. Interacts (phosphorylated form) with NFE2; the interaction phosphorylates NFE2 in undifferentiated cells. Interacts with NFATC4. Interacts with MECOM; regulates JNK signaling. Interacts with PIN1; this interaction mediates MAPK8 conformational changes leading to the binding of MAPK8 to its substrates. Interacts with GRIPAP1. Interacts with POU5F1; phosphorylates POU5F1 at 'Ser-355'. Interacts with STMN2, STMN3 and STMN4. Interacts with HSF4. Requires Mg(2+) as cofactor. Post-translationally, dually phosphorylated on Thr-183 and Tyr-185 by MAP2K7 and MAP2K4, which activates the enzyme. Phosphorylated by TAOK2. May be phosphorylated at Thr-183 and Tyr-185 by MAP3K1/MEKK1. Phosphorylated form is more concentrated at synapses than none-phosphorylated.

Its subcellular location is the cytoplasm. The protein localises to the nucleus. The protein resides in the synapse. It catalyses the reaction L-seryl-[protein] + ATP = O-phospho-L-seryl-[protein] + ADP + H(+). The catalysed reaction is L-threonyl-[protein] + ATP = O-phospho-L-threonyl-[protein] + ADP + H(+). With respect to regulation, activated by threonine and tyrosine phosphorylation by either of two dual specificity kinases, MAP2K4 and MAP2K7. MAP2K4 shows a strong preference for Tyr-185 while MAP2K7 phosphorylates Tyr-183 preferentially. Inhibited by dual specificity phosphatases, such as DUSP1. Inhibited by SERPINB3. Its function is as follows. Serine/threonine-protein kinase involved in various processes such as cell proliferation, differentiation, migration, transformation and programmed cell death. Extracellular stimuli such as pro-inflammatory cytokines or physical stress stimulate the stress-activated protein kinase/c-Jun N-terminal kinase (SAP/JNK) signaling pathway. In this cascade, two dual specificity kinases MAP2K4/MKK4 and MAP2K7/MKK7 phosphorylate and activate MAPK8/JNK1. In turn, MAPK8/JNK1 phosphorylates a number of transcription factors, primarily components of AP-1 such as JUN, JDP2 and ATF2 and thus regulates AP-1 transcriptional activity. Phosphorylates the replication licensing factor CDT1, inhibiting the interaction between CDT1 and the histone H4 acetylase HBO1 to replication origins. Loss of this interaction abrogates the acetylation required for replication initiation. Promotes stressed cell apoptosis by phosphorylating key regulatory factors including p53/TP53 and Yes-associates protein YAP1. In T-cells, MAPK8 and MAPK9 are required for polarized differentiation of T-helper cells into Th1 cells. Contributes to the survival of erythroid cells by phosphorylating the antagonist of cell death BAD upon EPO stimulation. Mediates starvation-induced BCL2 phosphorylation, BCL2 dissociation from BECN1, and thus activation of autophagy. Phosphorylates STMN2 and hence regulates microtubule dynamics, controlling neurite elongation in cortical neurons. In the developing brain, through its cytoplasmic activity on STMN2, negatively regulates the rate of exit from multipolar stage and of radial migration from the ventricular zone. Phosphorylates several other substrates including heat shock factor protein 4 (HSF4), the deacetylase SIRT1, ELK1, or the E3 ligase ITCH. Phosphorylates the CLOCK-BMAL1 heterodimer and plays a role in the regulation of the circadian clock. Phosphorylates the heat shock transcription factor HSF1, suppressing HSF1-induced transcriptional activity. Phosphorylates POU5F1, which results in the inhibition of POU5F1's transcriptional activity and enhances its proteasomal degradation. Phosphorylates JUND and this phosphorylation is inhibited in the presence of MEN1. In neurons, phosphorylates SYT4 which captures neuronal dense core vesicles at synapses. Phosphorylates EIF4ENIF1/4-ET in response to oxidative stress, promoting P-body assembly. Phosphorylates SIRT6 in response to oxidative stress, stimulating its mono-ADP-ribosyltransferase activity. Phosphorylates NLRP3, promoting assembly of the NLRP3 inflammasome. Phosphorylates ALKBH5 in response to reactive oxygen species (ROS), promoting ALKBH5 sumoylation and inactivation. In terms of biological role, JNK1 isoforms display different binding patterns: beta-1 preferentially binds to c-Jun, whereas alpha-1, alpha-2, and beta-2 have a similar low level of binding to both c-Jun or ATF2. However, there is no correlation between binding and phosphorylation, which is achieved at about the same efficiency by all isoforms. The polypeptide is Mitogen-activated protein kinase 8 (MAPK8) (Homo sapiens (Human)).